A 177-amino-acid chain; its full sequence is Probable inosine/xanthosine triphosphatase (177 aa).

This sequence belongs to the YjjX NTPase family. In terms of assembly, homodimer. Mg(2+) serves as cofactor. It depends on Mn(2+) as a cofactor.

It catalyses the reaction XTP + H2O = XDP + phosphate + H(+). The enzyme catalyses ITP + H2O = IDP + phosphate + H(+). In terms of biological role, phosphatase that hydrolyzes non-canonical purine nucleotides such as XTP and ITP to their respective diphosphate derivatives. Probably excludes non-canonical purines from DNA/RNA precursor pool, thus preventing their incorporation into DNA/RNA and avoiding chromosomal lesions. The protein is Probable inosine/xanthosine triphosphatase of Pyrobaculum islandicum (strain DSM 4184 / JCM 9189 / GEO3).